The chain runs to 397 residues: Acetate kinase (397 aa).

Mg(2+) is bound at residue Asn7. Residue Lys14 participates in ATP binding. Residue Arg90 coordinates substrate. Asp147 acts as the Proton donor/acceptor in catalysis. ATP-binding positions include 207-211, 282-284, and 330-334; these read HLGNG, DFR, and GLGEN. Glu383 contacts Mg(2+).

It belongs to the acetokinase family. In terms of assembly, homodimer. The cofactor is Mg(2+). Requires Mn(2+) as cofactor.

The protein localises to the cytoplasm. The enzyme catalyses acetate + ATP = acetyl phosphate + ADP. The protein operates within metabolic intermediate biosynthesis; acetyl-CoA biosynthesis; acetyl-CoA from acetate: step 1/2. Catalyzes the formation of acetyl phosphate from acetate and ATP. Can also catalyze the reverse reaction. The protein is Acetate kinase of Clostridium botulinum (strain Loch Maree / Type A3).